Here is a 423-residue protein sequence, read N- to C-terminus: MLDIKLIRSNPEILKKALQKRKDNFDVNGLLSLDEKRRKTLVELEQLRNKQNENSKLIPKYKKEGKDVSSLMEEMKSLSEKIKALDAEVRKIDEELNAILLTIPNIPHESVPMGDSDEDNVEVRRWGEPRKFDFTPKPHWEIGENLDILDFSKAAKVTGARFTFYKGLGARLERALMNFMLDLHVDKHGYVEVFPPFLVHRNSMIGTGQLPKFEEDAFKVSDTDYFLIPTAEVPVTNMYREQILDVKDLPIKHVAYSACFRAEAGAAGRDTRGLIRQHQFNKVELVKFTTPETSYEELEKLTRDAEEVLQMLEIPYRVVKICVGDLGFTAAMKYDIEVWMPSYNRYVEISSCSNFEDFQARRAGIKFRRGLNEKPEFVHTLNGSGVAMGRATACILENYQQEDGSVVVPKVLREYLGGISVIK.

230-232 (TAE) lines the L-serine pocket. 261–263 (RAE) is an ATP binding site. Glu-284 provides a ligand contact to L-serine. 348–351 (EISS) contributes to the ATP binding site. An L-serine-binding site is contributed by Ser-384.

Belongs to the class-II aminoacyl-tRNA synthetase family. Type-1 seryl-tRNA synthetase subfamily. As to quaternary structure, homodimer. The tRNA molecule binds across the dimer.

It is found in the cytoplasm. It catalyses the reaction tRNA(Ser) + L-serine + ATP = L-seryl-tRNA(Ser) + AMP + diphosphate + H(+). The enzyme catalyses tRNA(Sec) + L-serine + ATP = L-seryl-tRNA(Sec) + AMP + diphosphate + H(+). Its pathway is aminoacyl-tRNA biosynthesis; selenocysteinyl-tRNA(Sec) biosynthesis; L-seryl-tRNA(Sec) from L-serine and tRNA(Sec): step 1/1. Catalyzes the attachment of serine to tRNA(Ser). Is also able to aminoacylate tRNA(Sec) with serine, to form the misacylated tRNA L-seryl-tRNA(Sec), which will be further converted into selenocysteinyl-tRNA(Sec). The polypeptide is Serine--tRNA ligase (Acetivibrio thermocellus (strain ATCC 27405 / DSM 1237 / JCM 9322 / NBRC 103400 / NCIMB 10682 / NRRL B-4536 / VPI 7372) (Clostridium thermocellum)).